We begin with the raw amino-acid sequence, 91 residues long: U6 snRNA-associated Sm-like protein LSm5 (91 aa).

Residue A2 is modified to N-acetylalanine. A Sm domain is found at 13–88 (LPLELVDKCI…ITMLVPGGEG (76 aa)).

The protein belongs to the snRNP Sm proteins family. Component of the precatalytic spliceosome (spliceosome B complex). Component of the U4/U6-U5 tri-snRNP complex, a building block of the precatalytic spliceosome (spliceosome B complex). The U4/U6-U5 tri-snRNP complex is composed of the U4, U6 and U5 snRNAs and at least PRPF3, PRPF4, PRPF6, PRPF8, PRPF31, SNRNP200, TXNL4A, SNRNP40, SNRPB, SNRPD1, SNRPD2, SNRPD3, SNRPE, SNRPF, SNRPG, DDX23, CD2BP2, PPIH, SNU13, EFTUD2, SART1 and USP39, plus LSM2, LSM3, LSM4, LSM5, LSM6, LSM7 and LSM8. LSM2, LSM3, LSM4, LSM5, LSM6, LSM7 and LSM8 form a heptameric, ring-shaped subcomplex (the LSM2-8 complex) that is part of the U4/U6-U5 tri-snRNP complex and the precatalytic spliceosome.

The protein resides in the nucleus. In terms of biological role, plays a role in pre-mRNA splicing as component of the U4/U6-U5 tri-snRNP complex that is involved in spliceosome assembly, and as component of the precatalytic spliceosome (spliceosome B complex). The heptameric LSM2-8 complex binds specifically to the 3'-terminal U-tract of U6 snRNA. The protein is U6 snRNA-associated Sm-like protein LSm5 (LSM5) of Bos taurus (Bovine).